A 458-amino-acid polypeptide reads, in one-letter code: Alpha-2C adrenergic receptor (458 aa).

Residues 1 to 51 lie on the Extracellular side of the membrane; sequence MASPALAAALAAAAAEGPNGSDAGEWGSGGGANASGTDWGPPPGQYSAGAV. Residues Asn19 and Asn33 are each glycosylated (N-linked (GlcNAc...) asparagine). A helical transmembrane segment spans residues 52-76; it reads AGLAAVVGFLIVFTVVGNVLVVIAV. Topologically, residues 77–88 are cytoplasmic; it reads LTSRALRAPQNL. Residues 89 to 114 form a helical membrane-spanning segment; that stretch reads FLVSLASADILVATLVMPFSLANELM. The Extracellular segment spans residues 115-124; that stretch reads AYWYFGQVWC. A disulfide bridge connects residues Cys124 and Cys202. A helical transmembrane segment spans residues 125–147; that stretch reads GVYLALDVLFCTSSIVHLCAISL. Topologically, residues 148–168 are cytoplasmic; sequence DRYWSVTQAVEYNLKRTPRRV. Residues 169 to 191 form a helical membrane-spanning segment; that stretch reads KATIVAVWLISAVISFPPLVSFY. At 192-207 the chain is on the extracellular side; the sequence is RRPDGAAYPQCGLNDE. A helical transmembrane segment spans residues 208 to 231; that stretch reads TWYILSSCIGSFFAPCLIMGLVYA. The Cytoplasmic portion of the chain corresponds to 232 to 379; that stretch reads RIYRVAKLRT…QAREKRFTFV (148 aa). The disordered stretch occupies residues 245-343; the sequence is SEKRGPAGPD…SPGPGGRLSR (99 aa). A compositionally biased stretch (basic residues) spans 291-303; the sequence is RRRRRGALRRGGR. Residues 380–403 form a helical membrane-spanning segment; it reads LAVVMGVFVLCWFPFFFSYSLYGI. Residues 404 to 416 lie on the Extracellular side of the membrane; the sequence is CREACQLPEPLFK. A helical transmembrane segment spans residues 417-437; it reads FFFWIGYCNSSLNPVIYTVFN. Residues 438-458 lie on the Cytoplasmic side of the membrane; the sequence is QDFRRSFKHILFRRRRRGFRQ.

Belongs to the G-protein coupled receptor 1 family. Adrenergic receptor subfamily. ADRA2C sub-subfamily.

It is found in the cell membrane. Alpha-2 adrenergic receptors mediate the catecholamine-induced inhibition of adenylate cyclase through the action of G proteins. This is Alpha-2C adrenergic receptor (Adra2c) from Rattus norvegicus (Rat).